The chain runs to 247 residues: MADS-box transcription factor 1 (247 aa).

The 61-residue stretch at 1–61 (MGRGRVELKR…GKLYEFCSTS (61 aa)) folds into the MADS-box domain. Residues 91–181 (ELSSQQEYLK…RQRMEGYQIN (91 aa)) enclose the K-box domain.

Expressed abundantly in the seed coat and to lesser extent in young buds, carpels, petals, and stamen.

It is found in the nucleus. In terms of biological role, probable transcription factor. The chain is MADS-box transcription factor 1 from Pisum sativum (Garden pea).